A 493-amino-acid polypeptide reads, in one-letter code: MAGKVGKVSKKSDDVSSLAAKIRARALENQKKMQAASRKDSESDSSDEEVERPAKKQAKDEKVEEPEEEVTFESFAQLNLVPELIQACQNLNFTKPTPIQARAIPPALAGSDVIGLAQTGSGKTAAFAIPILNKLWEDQQPYYACVLAPTRELAQQIKETFDSLGSLMGVRTTCIVGGMNMMDQARDLMRKPHIIIATPGRLMDHLENTKGFSLKNLKFLVMDEADRLLDMEFGPVLDRILKIIPTKGRTTYLFSATMTSKIDKLQRASLTNPVKCAVSNKYQTVDTLVQTLMVVPGGLKNTFLIYLLNEFIGKTVIIFTRTKANAERLSGLCNLLEFSATALHGDLNQNQRTGALDLFKAGKRSILVATDVAARGLDIPSVDIVINYDIPVDSKSYIHRVGRTARAGRSGKSISLVSQYDLELILRIEEVLGKKLPKESVDKNIILTLRDSVDKANGEVVMEMNRRNKEKQARGKGRRGRMMAKENMDREEK.

Basic and acidic residues-rich tracts occupy residues 26–42 and 51–62; these read ALEN…KDSE and ERPAKKQAKDEK. The tract at residues 26–68 is disordered; sequence ALENQKKMQAASRKDSESDSSDEEVERPAKKQAKDEKVEEPEE. Residues 73-101 carry the Q motif motif; sequence ESFAQLNLVPELIQACQNLNFTKPTPIQA. One can recognise a Helicase ATP-binding domain in the interval 104–276; it reads IPPALAGSDV…RASLTNPVKC (173 aa). 117-124 is a binding site for ATP; that stretch reads AQTGSGKT. The DEAD box signature appears at 223–226; the sequence is DEAD. A Helicase C-terminal domain is found at 307–453; sequence LLNEFIGKTV…NIILTLRDSV (147 aa). Positions 467 to 493 are disordered; that stretch reads RNKEKQARGKGRRGRMMAKENMDREEK. A compositionally biased stretch (basic and acidic residues) spans 483 to 493; that stretch reads MAKENMDREEK.

The protein belongs to the DEAD box helicase family. DDX47/RRP3 subfamily. In terms of assembly, interacts with the SSU processome.

The protein localises to the nucleus. It catalyses the reaction ATP + H2O = ADP + phosphate + H(+). Its function is as follows. ATP-dependent rRNA helicase required for pre-ribosomal RNA processing. Involved in the maturation of the 35S-pre-rRNA and to its cleavage to mature 18S rRNA. The protein is ATP-dependent rRNA helicase RRP3 of Candida glabrata (strain ATCC 2001 / BCRC 20586 / JCM 3761 / NBRC 0622 / NRRL Y-65 / CBS 138) (Yeast).